A 132-amino-acid chain; its full sequence is Small ribosomal subunit protein uS8 (132 aa).

Belongs to the universal ribosomal protein uS8 family. Part of the 30S ribosomal subunit. Contacts proteins S5 and S12.

Functionally, one of the primary rRNA binding proteins, it binds directly to 16S rRNA central domain where it helps coordinate assembly of the platform of the 30S subunit. This is Small ribosomal subunit protein uS8 from Cereibacter sphaeroides (strain ATCC 17029 / ATH 2.4.9) (Rhodobacter sphaeroides).